The sequence spans 806 residues: Sperm head and tail associated protein (806 aa).

4 disordered regions span residues 1-36, 257-329, 428-496, and 707-806; these read MNSS…PSSC, TPAS…MSGS, LNNQ…CPQP, and SQIN…SKKK. The span at 13 to 27 shows a compositional bias: polar residues; the sequence is APSTSPQADCPNNYS. Residues 277-290 show a composition bias toward low complexity; the sequence is PPLSSASSPPSGNP. The span at 320–329 shows a compositional bias: polar residues; it reads LSSQAGMSGS. The interval 521–806 is interaction with CRISP2; the sequence is KEPPPETAVL…QIKSPHSKKK (286 aa). Composition is skewed to low complexity over residues 710-723 and 733-754; these read NHQN…KNSS and RRGA…SSTQ. Residues 773 to 788 are compositionally biased toward polar residues; that stretch reads QSQSPADGKIESQSKS.

In terms of assembly, interacts with CRISP2. In terms of tissue distribution, isoforms 3 and 4 are expressed in testis (at protein level).

It localises to the cytoplasm. Plays a role during spermatogenesis. This is Sperm head and tail associated protein (Nsun4) from Mus musculus (Mouse).